We begin with the raw amino-acid sequence, 1039 residues long: Antigenic heat-stable 120 kDa protein (1039 aa).

3 disordered regions span residues 1 to 115, 408 to 438, and 1020 to 1039; these read MSKD…TSDP, SSIE…MPQP, and QSEN…FPPR. Positions 31–44 are enriched in polar residues; that stretch reads PISSTANKDGNPDT. A compositionally biased stretch (basic and acidic residues) spans 54-69; the sequence is EYTEEQKQKLEQEQKE. Residues 85–114 are compositionally biased toward low complexity; that stretch reads FSFTPASSTQSTPSISSLSGGISSDSQTSD. Residues 424 to 438 are compositionally biased toward polar residues; sequence ANQPLQPETSQMPQP. Positions 1030–1039 are enriched in basic and acidic residues; sequence IKRESSFPPR.

It is found in the cytoplasm. The polypeptide is Antigenic heat-stable 120 kDa protein (sca4) (Rickettsia felis (strain ATCC VR-1525 / URRWXCal2) (Rickettsia azadi)).